A 479-amino-acid chain; its full sequence is Glucan 1,3-beta-glucosidase 2 (479 aa).

The signal sequence occupies residues 1–21 (MMLFLIHLMALCCMFVAEVAC). 6 N-linked (GlcNAc...) asparagine glycosylation sites follow: N25, N29, N63, N104, N187, and N193. Residue E227 is the Proton donor of the active site. 3 N-linked (GlcNAc...) asparagine glycosylation sites follow: N254, N285, and N288. The active-site Nucleophile is the H306. 2 N-linked (GlcNAc...) asparagine glycosylation sites follow: N318 and N451. S456 carries the GPI-anchor amidated serine lipid modification. Residues 457–479 (SASAIASNKMTLLLAFLLVILVI) constitute a propeptide, removed in mature form.

The protein belongs to the glycosyl hydrolase 5 (cellulase A) family. Post-translationally, predicted to be a substrate for cleavage by KEX2.

It localises to the cell membrane. The protein resides in the secreted. It catalyses the reaction Successive hydrolysis of beta-D-glucose units from the non-reducing ends of (1-&gt;3)-beta-D-glucans, releasing alpha-glucose.. Functionally, beta-glucanases participate in the metabolism of beta-glucan, the main structural component of the cell wall. EXG2 is not heavily involved in the exoglucanase function of the adhesion process. The polypeptide is Glucan 1,3-beta-glucosidase 2 (EXG2) (Candida albicans (strain SC5314 / ATCC MYA-2876) (Yeast)).